The following is a 236-amino-acid chain: Glucosamine-6-phosphate deaminase (236 aa).

D62 serves as the catalytic Proton acceptor; for enolization step. The active-site For ring-opening step is the N128. The active-site Proton acceptor; for ring-opening step is the H130. E135 (for ring-opening step) is an active-site residue.

The protein belongs to the glucosamine/galactosamine-6-phosphate isomerase family. NagB subfamily.

The catalysed reaction is alpha-D-glucosamine 6-phosphate + H2O = beta-D-fructose 6-phosphate + NH4(+). The protein operates within amino-sugar metabolism; N-acetylneuraminate degradation; D-fructose 6-phosphate from N-acetylneuraminate: step 5/5. Its function is as follows. Catalyzes the reversible isomerization-deamination of glucosamine 6-phosphate (GlcN6P) to form fructose 6-phosphate (Fru6P) and ammonium ion. The sequence is that of Glucosamine-6-phosphate deaminase from Pediococcus pentosaceus (strain ATCC 25745 / CCUG 21536 / LMG 10740 / 183-1w).